Here is a 275-residue protein sequence, read N- to C-terminus: MGQKVNPHGFRLGITTDFKSRWYADKLYKDYVKEDVAIRRMMTSGMERAGISKVEIERTRDRVRVDIHTARPGIVIGRRGAEADRIRGDLEKLTGKQVQLNILEVKNPETDAQLVAQAVAEQLSSRVSFRRAMRKSMQSAMKAGAKGIKIQCGGRLGGAEMSRSEFYREGRVPLHTLRANVDYGFFEAKTTFGRIGVKVWIYKGDVKNIAEVRAENAAARAGNRPARGGADRPARGGRGGERGGRGRKPQQAPAAEAPKAEAPAAAPAESTGTEA.

A KH type-2 domain is found at 38 to 106 (IRRMMTSGME…QVQLNILEVK (69 aa)). The segment covering 216–228 (NAAARAGNRPARG) has biased composition (low complexity). The interval 216-275 (NAAARAGNRPARGGADRPARGGRGGERGGRGRKPQQAPAAEAPKAEAPAAAPAESTGTEA) is disordered. The segment covering 229 to 244 (GADRPARGGRGGERGG) has biased composition (basic and acidic residues). Low complexity predominate over residues 249–268 (PQQAPAAEAPKAEAPAAAPA).

It belongs to the universal ribosomal protein uS3 family. Part of the 30S ribosomal subunit. Forms a tight complex with proteins S10 and S14.

Its function is as follows. Binds the lower part of the 30S subunit head. Binds mRNA in the 70S ribosome, positioning it for translation. The polypeptide is Small ribosomal subunit protein uS3 (Streptomyces avermitilis (strain ATCC 31267 / DSM 46492 / JCM 5070 / NBRC 14893 / NCIMB 12804 / NRRL 8165 / MA-4680)).